The sequence spans 605 residues: Zinc metalloproteinase-disintegrin-like BfMP (605 aa).

A signal peptide spans 1 to 11 (MLVVFPYQGSS). The propeptide occupies 12 to 179 (IILESGNVND…WESDEPFKNT (168 aa)). Residues asparagine 178 and asparagine 215 are each glycosylated (N-linked (GlcNAc...) asparagine). A Peptidase M12B domain is found at 196–392 (KYIEFYVAVD…DRPQCILNKP (197 aa)). Disulfide bonds link cysteine 307–cysteine 387, cysteine 347–cysteine 371, cysteine 350–cysteine 355, cysteine 403–cysteine 432, cysteine 414–cysteine 427, cysteine 416–cysteine 422, cysteine 426–cysteine 449, cysteine 440–cysteine 446, cysteine 445–cysteine 471, cysteine 458–cysteine 478, cysteine 465–cysteine 497, cysteine 490–cysteine 502, cysteine 509–cysteine 559, cysteine 524–cysteine 567, cysteine 537–cysteine 547, cysteine 554–cysteine 593, and cysteine 587–cysteine 598. Zn(2+) is bound at residue histidine 332. Glutamate 333 is a catalytic residue. Residues histidine 336 and histidine 342 each coordinate Zn(2+). Positions 400 to 486 (PAICGNYFVE…ECPTDIFRRN (87 aa)) constitute a Disintegrin domain. A D/ECD-tripeptide motif is present at residues 464–466 (DCD).

The protein belongs to the venom metalloproteinase (M12B) family. P-III subfamily. P-IIIa sub-subfamily. Monomer. Zn(2+) serves as cofactor. Expressed by the venom gland.

The protein resides in the secreted. In terms of biological role, snake venom zinc metalloproteinase that inhibits platelet aggregation and degrades fibrinogen. This is Zinc metalloproteinase-disintegrin-like BfMP from Bungarus fasciatus (Banded krait).